A 141-amino-acid polypeptide reads, in one-letter code: MATIKVDVVSAEEQIFSGLAKFVALPGEAGELGILPGHTPLITRIRPGAVRIEAESGDEEFVFVAGGILEVQPGAVTVLADTAIRGKDLDAAKAEEARKRAEETLQNAKSDIDLAKAQSELATAMAQLEAIQRLAKIRGRH.

It belongs to the ATPase epsilon chain family. In terms of assembly, F-type ATPases have 2 components, CF(1) - the catalytic core - and CF(0) - the membrane proton channel. CF(1) has five subunits: alpha(3), beta(3), gamma(1), delta(1), epsilon(1). CF(0) has three main subunits: a, b and c.

The protein localises to the cell inner membrane. Its function is as follows. Produces ATP from ADP in the presence of a proton gradient across the membrane. The sequence is that of ATP synthase epsilon chain from Burkholderia thailandensis (strain ATCC 700388 / DSM 13276 / CCUG 48851 / CIP 106301 / E264).